Consider the following 906-residue polypeptide: Protein translocase subunit SecA (906 aa).

Residues Gln-86, 104 to 108 (GEGKT), and Asp-511 contribute to the ATP site. 2 stretches are compositionally biased toward basic and acidic residues: residues 853–865 (HESV…RHDE) and 877–888 (VRREGPKVKRND). A disordered region spans residues 853 to 906 (HESVIDNNQRHDEDEQEEAPKVQQVRREGPKVKRNDPCPCGSGKKYKQCHSKVE). Positions 890, 892, 901, and 902 each coordinate Zn(2+). Basic residues predominate over residues 896-906 (KKYKQCHSKVE).

Belongs to the SecA family. In terms of assembly, monomer and homodimer. Part of the essential Sec protein translocation apparatus which comprises SecA, SecYEG and auxiliary proteins SecDF-YajC and YidC. It depends on Zn(2+) as a cofactor.

Its subcellular location is the cell inner membrane. It is found in the cytoplasm. It carries out the reaction ATP + H2O + cellular proteinSide 1 = ADP + phosphate + cellular proteinSide 2.. Functionally, part of the Sec protein translocase complex. Interacts with the SecYEG preprotein conducting channel. Has a central role in coupling the hydrolysis of ATP to the transfer of proteins into and across the cell membrane, serving both as a receptor for the preprotein-SecB complex and as an ATP-driven molecular motor driving the stepwise translocation of polypeptide chains across the membrane. The polypeptide is Protein translocase subunit SecA (Francisella tularensis subsp. tularensis (strain WY96-3418)).